The sequence spans 301 residues: MKFKNTLSIFKILIILFSFYNVAFSDDTEKYTFKGTFGTSALTNSKTNSVKGSADLIIARVDGGYKFSYSISLTGIDGTDVSQVKLLGPSAPNTDGGQLKLTLPFDSSTVLTSTKFVGGGSQAVAPNSPTSFYIGQTLIDITSEKSNYANEQFYITVATFTEGAQQPVSRSQLLYTGSSNTPNSGGGTNPNGSSDVPPTVGPISSSDSTNSNSSSTDTASSSPSSSPSSSPSPNDSEESDNDSLQTDSTVLNPGGVETSTAGSSTGTTSSTTGSKDSSTGNSILPTLIIVTFFVLTLVIMS.

The N-terminal stretch at 1-25 (MKFKNTLSIFKILIILFSFYNVAFS) is a signal peptide. Residues 26–279 (DDTEKYTFKG…STTGSKDSST (254 aa)) are Extracellular-facing. Residues 174-281 (LYTGSSNTPN…TGSKDSSTGN (108 aa)) are disordered. N-linked (GlcNAc...) asparagine glycosylation is found at Asn-191, Asn-212, Asn-234, and Asn-241. The segment covering 204-234 (SSSDSTNSNSSSTDTASSSPSSSPSSSPSPN) has biased composition (low complexity). The span at 254–281 (GGVETSTAGSSTGTTSSTTGSKDSSTGN) shows a compositional bias: low complexity. The chain crosses the membrane as a helical span at residues 280–300 (GNSILPTLIIVTFFVLTLVIM). Residue Ser-301 is a topological domain, cytoplasmic.

Its subcellular location is the membrane. This is an uncharacterized protein from Dictyostelium discoideum (Social amoeba).